Here is a 417-residue protein sequence, read N- to C-terminus: Probable secreted beta-glucosidase PSU1 (417 aa).

Residues 1-18 (MRFFETLALALLTTGALA) form the signal peptide.

This sequence belongs to the SUN family.

It is found in the secreted. The protein localises to the cell wall. Its function is as follows. Involved in cell wall synthesis. May be required for the activation of 1,3-beta-glucan synthase. The polypeptide is Probable secreted beta-glucosidase PSU1 (psu1) (Schizosaccharomyces pombe (strain 972 / ATCC 24843) (Fission yeast)).